We begin with the raw amino-acid sequence, 353 residues long: MTIALGRFTKEENDLFDIMDDWLRRDRFVFVGWSGLLLFPCAYFALGGWFTGTTFVTSWYTHGLASSYLEGCNFLTAAVSTPANSLAHSLLLLWGPEAQGDFTRWCQLGGLWTFVALHGAFGLIGFMLRQFELARSVQLRPYNAIAFSAPIAVFVSVFLIYPLGQSGWFFAPSFGVAAIFRFILFFQGFHNWTLNPFHMMGVAGVLGAALLCAIHGATVENTLFEDGDGANTFRAFNPTQAEETYSMVTANRFWSQIFGVAFSNKRWLHFFMLFVPVTGLWMSALGVVGLALNLRAYDFVSQEIRAAEDPEFETFYTKNILLNEGIRAWMAAQDQPHENLIFPEEVLPRGNAL.

Thr-2 is modified (N-acetylthreonine). A Phosphothreonine modification is found at Thr-2. The chain crosses the membrane as a helical span at residues 41 to 61 (CAYFALGGWFTGTTFVTSWYT). His-118 is a binding site for chlorophyll a. A helical transmembrane segment spans residues 125 to 141 (GFMLRQFELARSVQLRP). Pheophytin a-binding residues include Gln-130 and Asn-143. Residues 153–166 (VFVSVFLIYPLGQS) traverse the membrane as a helical segment. Residue His-198 coordinates chlorophyll a. A helical transmembrane segment spans residues 208 to 228 (AALLCAIHGATVENTLFEDGD). The a plastoquinone site is built by His-215 and Phe-262. Residue His-215 participates in Fe cation binding. His-269 is a binding site for Fe cation. Residues 279 to 295 (GLWMSALGVVGLALNLR) traverse the membrane as a helical segment.

This sequence belongs to the reaction center PufL/M/PsbA/D family. PSII is composed of 1 copy each of membrane proteins PsbA, PsbB, PsbC, PsbD, PsbE, PsbF, PsbH, PsbI, PsbJ, PsbK, PsbL, PsbM, PsbT, PsbX, PsbY, PsbZ, Psb30/Ycf12, at least 3 peripheral proteins of the oxygen-evolving complex and a large number of cofactors. It forms dimeric complexes. The D1/D2 heterodimer binds P680, chlorophylls that are the primary electron donor of PSII, and subsequent electron acceptors. It shares a non-heme iron and each subunit binds pheophytin, quinone, additional chlorophylls, carotenoids and lipids. There is also a Cl(-1) ion associated with D1 and D2, which is required for oxygen evolution. The PSII complex binds additional chlorophylls, carotenoids and specific lipids. is required as a cofactor.

The protein resides in the plastid. It is found in the chloroplast thylakoid membrane. It carries out the reaction 2 a plastoquinone + 4 hnu + 2 H2O = 2 a plastoquinol + O2. In terms of biological role, photosystem II (PSII) is a light-driven water:plastoquinone oxidoreductase that uses light energy to abstract electrons from H(2)O, generating O(2) and a proton gradient subsequently used for ATP formation. It consists of a core antenna complex that captures photons, and an electron transfer chain that converts photonic excitation into a charge separation. The D1/D2 (PsbA/PsbD) reaction center heterodimer binds P680, the primary electron donor of PSII as well as several subsequent electron acceptors. D2 is needed for assembly of a stable PSII complex. This Nuphar advena (Common spatterdock) protein is Photosystem II D2 protein.